The following is a 262-amino-acid chain: Snake venom serine proteinase 1 (262 aa).

Positions 1–18 (MVLIRVLANLLILQLSYA) are cleaved as a signal peptide. Residues 19–24 (QKSSEL) constitute a propeptide that is removed on maturation. Positions 25 to 253 (VIGGDECNIN…HLDWIQSIIA (229 aa)) constitute a Peptidase S1 domain. Intrachain disulfides connect C31–C165, C52–C68, C144–C214, C176–C193, and C204–C229. Catalysis depends on H67, which acts as the Charge relay system. N-linked (GlcNAc...) asparagine glycosylation occurs at N105. D112 acts as the Charge relay system in catalysis. Catalysis depends on S208, which acts as the Charge relay system.

The protein belongs to the peptidase S1 family. Snake venom subfamily. Monomer. As to expression, expressed by the venom gland.

It is found in the secreted. Its function is as follows. Snake venom serine protease that may act in the hemostasis system of the prey. The sequence is that of Snake venom serine proteinase 1 from Crotalus adamanteus (Eastern diamondback rattlesnake).